A 159-amino-acid polypeptide reads, in one-letter code: Ribosomal RNA large subunit methyltransferase H (159 aa).

S-adenosyl-L-methionine contacts are provided by residues Leu76, Gly108, and 127-132; that span reads FGRLTL.

It belongs to the RNA methyltransferase RlmH family. As to quaternary structure, homodimer.

The protein localises to the cytoplasm. It catalyses the reaction pseudouridine(1915) in 23S rRNA + S-adenosyl-L-methionine = N(3)-methylpseudouridine(1915) in 23S rRNA + S-adenosyl-L-homocysteine + H(+). In terms of biological role, specifically methylates the pseudouridine at position 1915 (m3Psi1915) in 23S rRNA. The chain is Ribosomal RNA large subunit methyltransferase H from Streptococcus uberis (strain ATCC BAA-854 / 0140J).